A 129-amino-acid chain; its full sequence is Small ribosomal subunit protein uS12 (129 aa).

At aspartate 89 the chain carries 3-methylthioaspartic acid. The interval threonine 101–lysine 129 is disordered.

The protein belongs to the universal ribosomal protein uS12 family. In terms of assembly, part of the 30S ribosomal subunit. Contacts proteins S8 and S17. May interact with IF1 in the 30S initiation complex.

With S4 and S5 plays an important role in translational accuracy. Its function is as follows. Interacts with and stabilizes bases of the 16S rRNA that are involved in tRNA selection in the A site and with the mRNA backbone. Located at the interface of the 30S and 50S subunits, it traverses the body of the 30S subunit contacting proteins on the other side and probably holding the rRNA structure together. The combined cluster of proteins S8, S12 and S17 appears to hold together the shoulder and platform of the 30S subunit. The sequence is that of Small ribosomal subunit protein uS12 from Chlorobium luteolum (strain DSM 273 / BCRC 81028 / 2530) (Pelodictyon luteolum).